The chain runs to 176 residues: Ribosome maturation factor RimM (176 aa).

Residues 94–176 form the PRC barrel domain; it reads KDEFFYFEIL…RFGFEILQNS (83 aa).

This sequence belongs to the RimM family. Binds ribosomal protein uS19.

It is found in the cytoplasm. Its function is as follows. An accessory protein needed during the final step in the assembly of 30S ribosomal subunit, possibly for assembly of the head region. Essential for efficient processing of 16S rRNA. May be needed both before and after RbfA during the maturation of 16S rRNA. It has affinity for free ribosomal 30S subunits but not for 70S ribosomes. This is Ribosome maturation factor RimM from Campylobacter hominis (strain ATCC BAA-381 / DSM 21671 / CCUG 45161 / LMG 19568 / NCTC 13146 / CH001A).